Here is a 249-residue protein sequence, read N- to C-terminus: Triosephosphate isomerase (249 aa).

9–11 (NWK) is a substrate binding site. The active-site Electrophile is His94. Glu166 functions as the Proton acceptor in the catalytic mechanism. Substrate contacts are provided by residues Gly172, Ser212, and 233–234 (GG).

Belongs to the triosephosphate isomerase family. Homodimer.

It is found in the cytoplasm. It carries out the reaction D-glyceraldehyde 3-phosphate = dihydroxyacetone phosphate. Its pathway is carbohydrate biosynthesis; gluconeogenesis. The protein operates within carbohydrate degradation; glycolysis; D-glyceraldehyde 3-phosphate from glycerone phosphate: step 1/1. Involved in the gluconeogenesis. Catalyzes stereospecifically the conversion of dihydroxyacetone phosphate (DHAP) to D-glyceraldehyde-3-phosphate (G3P). The protein is Triosephosphate isomerase of Treponema pallidum (strain Nichols).